A 306-amino-acid polypeptide reads, in one-letter code: WUSCHEL-related homeobox 13 (306 aa).

The segment covering methionine 1 to serine 11 has biased composition (pro residues). Disordered stretches follow at residues methionine 1 to arginine 20, proline 103 to glutamate 142, and serine 190 to threonine 276. Positions glycine 126–glutamate 142 are enriched in basic and acidic residues. Residues aspartate 132–leucine 196 constitute a DNA-binding region (homeobox; WUS-type). Gly residues predominate over residues glycine 199–glycine 210. Over residues phenylalanine 231 to valine 242 the composition is skewed to pro residues. Residues glutamine 243–serine 270 are compositionally biased toward low complexity.

Belongs to the WUS homeobox family.

The protein localises to the nucleus. Its function is as follows. Transcription factor which may be involved in developmental processes. This Oryza sativa subsp. japonica (Rice) protein is WUSCHEL-related homeobox 13 (WOX13).